Reading from the N-terminus, the 197-residue chain is dCTP deaminase (197 aa).

DCTP-binding positions include 110 to 115 (RSSLAR), aspartate 128, 136 to 138 (VLE), tyrosine 171, and glutamine 182. Glutamate 138 serves as the catalytic Proton donor/acceptor.

The protein belongs to the dCTP deaminase family. In terms of assembly, homotrimer.

The enzyme catalyses dCTP + H2O + H(+) = dUTP + NH4(+). Its pathway is pyrimidine metabolism; dUMP biosynthesis; dUMP from dCTP (dUTP route): step 1/2. Functionally, catalyzes the deamination of dCTP to dUTP. The sequence is that of dCTP deaminase from Alteromonas mediterranea (strain DSM 17117 / CIP 110805 / LMG 28347 / Deep ecotype).